A 544-amino-acid chain; its full sequence is (E,E)-germacrene B synthase (544 aa).

Residues D296, D300, and E449 each coordinate Mg(2+). Residues 296-300 (DDTFD) carry the DDXXD motif motif.

The protein belongs to the terpene synthase family. Mg(2+) serves as cofactor. It depends on Mn(2+) as a cofactor.

It is found in the cytoplasm. The enzyme catalyses (2E,6E)-farnesyl diphosphate = (1E,4E)-germacrene B + diphosphate. It functions in the pathway secondary metabolite biosynthesis; terpenoid biosynthesis. Involved in the biosynthesis of germacrene B. The sequence is that of (E,E)-germacrene B synthase (SSTLH1) from Solanum habrochaites (Wild tomato).